The chain runs to 1085 residues: Error-prone DNA polymerase 2 (1085 aa).

Residues 1040–1066 (AGRGDEFAHGGGGPDSRDRQKPVVPRD) are disordered.

Belongs to the DNA polymerase type-C family. DnaE2 subfamily.

It localises to the cytoplasm. The catalysed reaction is DNA(n) + a 2'-deoxyribonucleoside 5'-triphosphate = DNA(n+1) + diphosphate. In terms of biological role, DNA polymerase involved in damage-induced mutagenesis and translesion synthesis (TLS). It is not the major replicative DNA polymerase. The chain is Error-prone DNA polymerase 2 from Agrobacterium fabrum (strain C58 / ATCC 33970) (Agrobacterium tumefaciens (strain C58)).